The following is a 370-amino-acid chain: MASETAFQATGAGRIVISVDAMGGDRGPAAVVAGLAESASAIPGAYFIVHGDEVHLGPMIAKRKDLKGRCEIRHAPRVVTMNDKPSQVMRHGEGTSMWSCIESVRAGEATVAVSCGNTGALMAVSMIRLRKLPGVNRPAIACMWPSRNPGGFNVMLDVGADIKADAEDLAQYALMGASYARNGLSLERPRVGLLNVGTEEHKGRAELKVAQDLISANAAAGAYEFVGFIEGGDIPGRRCDVIVTDGFTGNVALKTGEGTAKLISDFLREAFGANILSKMAAILALGSLKRLQKRIDPRRVNGGVFLGLNGTVVKSHGSADGTGVAAAIALAARLAQSGFHERLAARLASAGRAGQDAPDEMAAPGRSEKR.

The disordered stretch occupies residues 349-370; it reads SAGRAGQDAPDEMAAPGRSEKR.

This sequence belongs to the PlsX family. In terms of assembly, homodimer. Probably interacts with PlsY.

It is found in the cytoplasm. The catalysed reaction is a fatty acyl-[ACP] + phosphate = an acyl phosphate + holo-[ACP]. Its pathway is lipid metabolism; phospholipid metabolism. Its function is as follows. Catalyzes the reversible formation of acyl-phosphate (acyl-PO(4)) from acyl-[acyl-carrier-protein] (acyl-ACP). This enzyme utilizes acyl-ACP as fatty acyl donor, but not acyl-CoA. The chain is Phosphate acyltransferase from Cereibacter sphaeroides (strain ATCC 17029 / ATH 2.4.9) (Rhodobacter sphaeroides).